The chain runs to 217 residues: Octanoyltransferase (217 aa).

The region spanning aspartate 32–glutamine 207 is the BPL/LPL catalytic domain. Residues arginine 71–histidine 78, serine 138–glycine 140, and glycine 151–alanine 153 each bind substrate. The active-site Acyl-thioester intermediate is the cysteine 169.

The protein belongs to the LipB family.

It is found in the cytoplasm. It carries out the reaction octanoyl-[ACP] + L-lysyl-[protein] = N(6)-octanoyl-L-lysyl-[protein] + holo-[ACP] + H(+). The protein operates within protein modification; protein lipoylation via endogenous pathway; protein N(6)-(lipoyl)lysine from octanoyl-[acyl-carrier-protein]: step 1/2. Catalyzes the transfer of endogenously produced octanoic acid from octanoyl-acyl-carrier-protein onto the lipoyl domains of lipoate-dependent enzymes. Lipoyl-ACP can also act as a substrate although octanoyl-ACP is likely to be the physiological substrate. In Pseudoalteromonas translucida (strain TAC 125), this protein is Octanoyltransferase.